The primary structure comprises 70 residues: Protein SlyX homolog (70 aa).

It belongs to the SlyX family.

This is Protein SlyX homolog from Shewanella putrefaciens (strain CN-32 / ATCC BAA-453).